We begin with the raw amino-acid sequence, 131 residues long: Small ribosomal subunit protein uS8 (131 aa).

Belongs to the universal ribosomal protein uS8 family. In terms of assembly, part of the 30S ribosomal subunit. Contacts proteins S5 and S12.

Its function is as follows. One of the primary rRNA binding proteins, it binds directly to 16S rRNA central domain where it helps coordinate assembly of the platform of the 30S subunit. The chain is Small ribosomal subunit protein uS8 from Geobacillus stearothermophilus (Bacillus stearothermophilus).